A 169-amino-acid chain; its full sequence is Peptide deformylase (169 aa).

Fe cation is bound by residues Cys91 and His133. Residue Glu134 is part of the active site. His137 serves as a coordination point for Fe cation.

The protein belongs to the polypeptide deformylase family. Requires Fe(2+) as cofactor.

It catalyses the reaction N-terminal N-formyl-L-methionyl-[peptide] + H2O = N-terminal L-methionyl-[peptide] + formate. Its function is as follows. Removes the formyl group from the N-terminal Met of newly synthesized proteins. Requires at least a dipeptide for an efficient rate of reaction. N-terminal L-methionine is a prerequisite for activity but the enzyme has broad specificity at other positions. This is Peptide deformylase from Erwinia tasmaniensis (strain DSM 17950 / CFBP 7177 / CIP 109463 / NCPPB 4357 / Et1/99).